Reading from the N-terminus, the 918-residue chain is Chaperone protein ClpC1, chloroplastic (918 aa).

In terms of domain architecture, Clp R spans 88–230; it reads FERFTEKAIK…RTQVIRMVGE (143 aa). Repeat regions lie at residues 91–156 and 166–230; these read FTEK…IGRG and FTPR…MVGE. Residues 251–498 are i; sequence LEEYGTNLTK…RVRLRHAQLP (248 aa). ATP is bound at residue 296–303; it reads GEPGVGKT. Positions 505–540 constitute a UVR domain; the sequence is DKELRQVTKDKNEAVRGQDFEKAGELRDREMELKAQ. Residues 565 to 756 form an II region; sequence VTEADIQHIV…LLIMTSNVGS (192 aa). 639-646 is a binding site for ATP; sequence GPTGVGKS.

It belongs to the ClpA/ClpB family. ClpC subfamily. As to expression, widely expressed.

The protein resides in the plastid. It localises to the chloroplast. Molecular chaperone that may interact with a ClpP-like protease involved in degradation of denatured proteins in the chloroplast. The protein is Chaperone protein ClpC1, chloroplastic (CLPC1) of Oryza sativa subsp. japonica (Rice).